Here is a 397-residue protein sequence, read N- to C-terminus: Tryptophan synthase beta chain (397 aa).

Lys-88 bears the N6-(pyridoxal phosphate)lysine mark.

This sequence belongs to the TrpB family. Tetramer of two alpha and two beta chains. Pyridoxal 5'-phosphate serves as cofactor.

The enzyme catalyses (1S,2R)-1-C-(indol-3-yl)glycerol 3-phosphate + L-serine = D-glyceraldehyde 3-phosphate + L-tryptophan + H2O. It functions in the pathway amino-acid biosynthesis; L-tryptophan biosynthesis; L-tryptophan from chorismate: step 5/5. Its function is as follows. The beta subunit is responsible for the synthesis of L-tryptophan from indole and L-serine. In Shewanella amazonensis (strain ATCC BAA-1098 / SB2B), this protein is Tryptophan synthase beta chain.